The primary structure comprises 1109 residues: DNA mismatch repair protein MSH7 (1109 aa).

Disordered stretches follow at residues 19 to 45 (TKGLVSGDAASGGGGSGGPRFNVKEGD) and 61 to 86 (DEVRGTDTPPEKVPRRVLPSGFKPAE). Residues 61 to 74 (DEVRGTDTPPEKVP) are compositionally biased toward basic and acidic residues. 853 to 860 (GPNMGGKS) is a binding site for ATP.

This sequence belongs to the DNA mismatch repair MutS family. In terms of assembly, heterodimer consisting of MSH2-MSH7 (MutS gamma).

The protein resides in the nucleus. Component of the post-replicative DNA mismatch repair system (MMR). Forms the heterodimer MutS gamma (MSH2-MSH7 heterodimer) which binds to DNA mismatches thereby initiating DNA repair. MutS gamma recognizes specifically the T/G single base mismatch, but not trinucleotide insertion-deletion loops (IDL). The protein is DNA mismatch repair protein MSH7 (MSH7) of Arabidopsis thaliana (Mouse-ear cress).